We begin with the raw amino-acid sequence, 94 residues long: MKHWRLVSYDIREPKRLRRVAKIMEGFGERIQYSVFRIYSTDKELEKLRWKLAKVTEEEDNIFYLTLCTKCASGAHTQEKKSAWPEAPKTLKIL.

D10 lines the Mg(2+) pocket.

It belongs to the CRISPR-associated endoribonuclease Cas2 protein family. Homodimer, forms a heterotetramer with a Cas1 homodimer. Mg(2+) is required as a cofactor.

CRISPR (clustered regularly interspaced short palindromic repeat), is an adaptive immune system that provides protection against mobile genetic elements (viruses, transposable elements and conjugative plasmids). CRISPR clusters contain sequences complementary to antecedent mobile elements and target invading nucleic acids. CRISPR clusters are transcribed and processed into CRISPR RNA (crRNA). Functions as a ssRNA-specific endoribonuclease. Involved in the integration of spacer DNA into the CRISPR cassette. The protein is CRISPR-associated endoribonuclease Cas2 of Leptospira interrogans serogroup Icterohaemorrhagiae serovar Lai (strain 56601).